The chain runs to 308 residues: uncharacterized protein (308 aa).

Residue Glu-59 is part of the active site.

The protein belongs to the PhzF family.

This is an uncharacterized protein from Deinococcus radiodurans (strain ATCC 13939 / DSM 20539 / JCM 16871 / CCUG 27074 / LMG 4051 / NBRC 15346 / NCIMB 9279 / VKM B-1422 / R1).